We begin with the raw amino-acid sequence, 386 residues long: 2-isopropylmalate synthase (386 aa).

The Pyruvate carboxyltransferase domain maps to 12 to 265 (VRIFDTTLRD…EVNIKTYKLY (254 aa)). A divalent metal cation contacts are provided by D21, H203, H205, and N239.

Belongs to the alpha-IPM synthase/homocitrate synthase family. Homodimer. A divalent metal cation serves as cofactor.

The catalysed reaction is 3-methyl-2-oxobutanoate + acetyl-CoA + H2O = (2S)-2-isopropylmalate + CoA + H(+). Its pathway is amino-acid biosynthesis; L-leucine biosynthesis; L-leucine from 3-methyl-2-oxobutanoate: step 1/4. Catalyzes the condensation of the acetyl group of acetyl-CoA with 3-methyl-2-oxobutanoate (2-oxoisovalerate) to form 3-carboxy-3-hydroxy-4-methylpentanoate (2-isopropylmalate). Carries out the first step of the leucine biosynthesis pathway. This chain is 2-isopropylmalate synthase (leuA), found in Sulfurisphaera tokodaii (strain DSM 16993 / JCM 10545 / NBRC 100140 / 7) (Sulfolobus tokodaii).